The primary structure comprises 257 residues: UPF0758 protein Bcenmc03_2526 (257 aa).

The tract at residues 1-53 is disordered; it reads MLSPCPILPSAECRDTADTPADPPGRVIPINRRRRRPGDWRPERPRERLLERG. The span at 37–51 shows a compositional bias: basic and acidic residues; it reads PGDWRPERPRERLLE. The MPN domain occupies 135–257; sequence QIDSPGAVED…TFSFARAGWL (123 aa). Residues His-206, His-208, and Asp-219 each contribute to the Zn(2+) site. The JAMM motif signature appears at 206–219; sequence HNHPSGAVQPSAED.

It belongs to the UPF0758 family.

The sequence is that of UPF0758 protein Bcenmc03_2526 from Burkholderia orbicola (strain MC0-3).